Here is a 131-residue protein sequence, read N- to C-terminus: Protein Bouncer (131 aa).

The first 26 residues, 1-26 (MGSLRTRQLFHAALLWLCLPLPLLLC), serve as a signal peptide directing secretion. Cystine bridges form between Cys-31–Cys-56, Cys-50–Cys-74, Cys-80–Cys-99, and Cys-100–Cys-105. Residues 31–106 (CYYSPVLEKE…YSCCDWPYCN (76 aa)) form the UPAR/Ly6 domain. A glycan (N-linked (GlcNAc...) asparagine) is linked at Asn-65. Asn-106 is lipidated: GPI-anchor amidated asparagine. A propeptide spans 107–131 (RAVALEPLTAMLVAAAVVACSFCLT) (removed in mature form).

The protein belongs to the SPACA4/bouncer family. In terms of assembly, interacts with spermatocyte complex composed of izumo1, spaca6 and tmem81. As to expression, expressed in oocytes. Not expressed in testis.

It is found in the cell membrane. In terms of biological role, oocyte-expressed fertilization factor that mediates sperm-egg binding and is essential for sperm entry into the egg. Necessary and sufficient to mediate species-specific gamete recognition and fertilization, which is essential for vertebrate species performing external fertilization. External fertilization cannot guarantee that only conspecific sperm reaches the egg by precopulatory mate choice: proteins such as Bouncer can therefore support the selection of conspecific sperm. The protein is Protein Bouncer of Oryzias latipes (Japanese rice fish).